A 648-amino-acid polypeptide reads, in one-letter code: Magnetosome protein MamZ (648 aa).

The segment at Met1 to Ile431 is major facilitator domain. The next 18 membrane-spanning stretches (helical) occupy residues Ile28–Leu49, Ile69–Leu87, Val94–Leu113, Leu119–Val143, Leu163–Ile182, Tyr188–Phe207, Phe252–Ser273, Ala285–Trp305, Ala317–Phe335, Trp341–Leu361, Ile373–Ser395, Ala407–Ala428, Pro449–Ile468, Tyr488–Val506, Tyr518–Val538, Phe558–Phe574, Ala595–Asn612, and Pro618–Tyr634. The segment at Lys444–Leu645 is ferric reductase-like domain, required for correct magnetite crystal formation.

It in the N-terminal section; belongs to the major facilitator superfamily. As to quaternary structure, probably interacts with FtsZ-like and MamY proteins.

The protein resides in the magnetosome membrane. Functionally, required for correct biomineralization of the magnetosome; probably converts and then transports some form of iron. It is partially functionally redundant with MamH. May function with MamX, MamY amd Mms6 in biomineralization. Despite its strong similarity to MsrQ (AC V6EX82) this protein does not genetically interact with bona fide MsrP (AC V6F0A4), which is encoded elsewhere in the genome. The chain is Magnetosome protein MamZ from Magnetospirillum gryphiswaldense (strain DSM 6361 / JCM 21280 / NBRC 15271 / MSR-1).